A 355-amino-acid chain; its full sequence is Probable dual-specificity RNA methyltransferase RlmN (355 aa).

Catalysis depends on Glu-107, which acts as the Proton acceptor. One can recognise a Radical SAM core domain in the interval 113-341 (TDKRLTVCVS…VSVRYSRGLE (229 aa)). Residues Cys-120 and Cys-346 are joined by a disulfide bond. Residues Cys-127, Cys-131, and Cys-134 each coordinate [4Fe-4S] cluster. S-adenosyl-L-methionine contacts are provided by residues 174–175 (GE), Ser-204, 227–229 (SLH), and Asn-303. The active-site S-methylcysteine intermediate is Cys-346.

This sequence belongs to the radical SAM superfamily. RlmN family. [4Fe-4S] cluster serves as cofactor.

Its subcellular location is the cytoplasm. It carries out the reaction adenosine(2503) in 23S rRNA + 2 reduced [2Fe-2S]-[ferredoxin] + 2 S-adenosyl-L-methionine = 2-methyladenosine(2503) in 23S rRNA + 5'-deoxyadenosine + L-methionine + 2 oxidized [2Fe-2S]-[ferredoxin] + S-adenosyl-L-homocysteine. It catalyses the reaction adenosine(37) in tRNA + 2 reduced [2Fe-2S]-[ferredoxin] + 2 S-adenosyl-L-methionine = 2-methyladenosine(37) in tRNA + 5'-deoxyadenosine + L-methionine + 2 oxidized [2Fe-2S]-[ferredoxin] + S-adenosyl-L-homocysteine. In terms of biological role, specifically methylates position 2 of adenine 2503 in 23S rRNA and position 2 of adenine 37 in tRNAs. This Trichormus variabilis (strain ATCC 29413 / PCC 7937) (Anabaena variabilis) protein is Probable dual-specificity RNA methyltransferase RlmN.